A 202-amino-acid chain; its full sequence is uncharacterized protein (202 aa).

The protein belongs to the dienelactone hydrolase family.

This is an uncharacterized protein from Bacillus subtilis (strain 168).